The chain runs to 391 residues: Somatostatin receptor type 1 (391 aa).

The segment at methionine 1–threonine 50 is disordered. Over methionine 1–glycine 56 the chain is Extracellular. Asparagine 4 carries an N-linked (GlcNAc...) asparagine glycan. Low complexity predominate over residues serine 8–serine 20. Residues asparagine 44 and asparagine 48 are each glycosylated (N-linked (GlcNAc...) asparagine). A helical transmembrane segment spans residues serine 57–leucine 84. At arginine 85–asparagine 94 the chain is on the cytoplasmic side. A helical transmembrane segment spans residues isoleucine 95–leucine 120. The Extracellular segment spans residues arginine 121–arginine 131. Cysteine 130 and cysteine 208 are oxidised to a cystine. A helical transmembrane segment spans residues leucine 132–valine 153. At aspartate 154 to lysine 175 the chain is on the cytoplasmic side. The helical transmembrane segment at valine 176–serine 196 threads the bilayer. Residues arginine 197–tryptophan 219 lie on the Extracellular side of the membrane. Residues leucine 220–valine 244 traverse the membrane as a helical segment. Residues leucine 245–threonine 270 are Cytoplasmic-facing. Residues leucine 271–phenylalanine 296 form a helical membrane-spanning segment. The Extracellular portion of the chain corresponds to alanine 297 to threonine 303. The chain crosses the membrane as a helical span at residues valine 304–serine 327. Residues aspartate 328–leucine 391 lie on the Cytoplasmic side of the membrane. Cysteine 339 carries S-palmitoyl cysteine lipidation.

The protein belongs to the G-protein coupled receptor 1 family. In terms of tissue distribution, jejunum and stomach.

It localises to the cell membrane. Its function is as follows. Receptor for somatostatin with higher affinity for somatostatin-14 than -28. This receptor is coupled via pertussis toxin sensitive G proteins to inhibition of adenylyl cyclase. In addition it stimulates phosphotyrosine phosphatase and Na(+)/H(+) exchanger via pertussis toxin insensitive G proteins. This is Somatostatin receptor type 1 (Sstr1) from Mus musculus (Mouse).